The following is a 203-amino-acid chain: Somatotropin (203 aa).

The N-terminal stretch at 1-17 (MNRVILLLSVMCVGVSS) is a signal peptide. Residue Gln18 is modified to Pyrrolidone carboxylic acid. Intrachain disulfides connect Cys68–Cys176 and Cys193–Cys201.

The protein belongs to the somatotropin/prolactin family.

The protein resides in the secreted. Growth hormone plays an important role in growth control and is involved in the regulation of several anabolic processes. Implicated as an osmoregulatory substance important for seawater adaptation. This Verasper variegatus (Spotted flounder) protein is Somatotropin (gh).